A 325-amino-acid polypeptide reads, in one-letter code: Neural proliferation differentiation and control protein 1 (325 aa).

The N-terminal stretch at 1–34 is a signal peptide; it reads MATPLPPPSPRHLRLLRLLLSGLVLGAALRGAAA. A disordered region spans residues 138-175; that stretch reads QGLELGLPSTPGTPTPTPHTSLGSPVSSDPVHMSPLEP. Residues 182-202 form a helical membrane-spanning segment; sequence GLALVLILAFCVAGAAALSVA. Ser-229 carries the post-translational modification Phosphoserine. A disordered region spans residues 266–290; the sequence is EPPKELDTASSDEENEDGDFTVYEC. Positions 275-284 are enriched in acidic residues; sequence SSDEENEDGD.

The protein belongs to the NPDC1/cab-1 family. As to expression, strongly expressed in adult brain; especially in hippocampus, frontal lobe and temporal lobe.

It localises to the membrane. In terms of biological role, suppresses oncogenic transformation in neural and non-neural cells and down-regulates neural cell proliferation. Might be involved in transcriptional regulation. This is Neural proliferation differentiation and control protein 1 (NPDC1) from Homo sapiens (Human).